The sequence spans 465 residues: Auxin transporter-like protein 3 (465 aa).

The Cytoplasmic segment spans residues 1 to 52 (MTSEKVETVVAGNYLEMEREEEGSKSTTGKLSKFFWHGGSVYDAWFSCASNQ). A helical membrane pass occupies residues 53–70 (VAQVLLTLPYSFSQLGML). At 71–72 (SG) the chain is on the extracellular side. A helical membrane pass occupies residues 73 to 93 (ILFQIFYGLMGSWTAYIISVL). At 94–129 (YVEYRTRKEREKVDFRNHVIQWFEVLDGLLGKHWRN) the chain is on the cytoplasmic side. The chain crosses the membrane as a helical span at residues 130–150 (LGLFFNCTFLLFGSVIQLIAC). Topologically, residues 151 to 165 (ASNIYYINDHLDKRT) are extracellular. Residues 166–186 (WTYIFGACCATTVFIPSFHNY) form a helical membrane-spanning segment. The Cytoplasmic segment spans residues 187–189 (RIW). A helical transmembrane segment spans residues 190–210 (SFLGLVMTTYTAWYMTIASIL). Over 211–225 (HGQAEDVKHSGPTKL) the chain is Extracellular. Residues 226-246 (VLYFTGATNILYTFGGHAVTV) form a helical membrane-spanning segment. Residues 247-259 (EIMHAMWKPQKFK) are Cytoplasmic-facing. Residues 260–280 (MIYLIATLYVMTLTLPSAAAV) form a helical membrane-spanning segment. Residues 281 to 307 (YWAFGDNLLTHSNALSLLPRTGFRDTA) are Extracellular-facing. The chain crosses the membrane as a helical span at residues 308 to 328 (VILMLIHQFITFGFACTPLYF). Over 329-349 (VWEKFLGVHETKSLLKRALVR) the chain is Cytoplasmic. A helical membrane pass occupies residues 350–370 (LPVVIPIWFLAIIFPFFGPIN). At 371–374 (STVG) the chain is on the extracellular side. A helical transmembrane segment spans residues 375–395 (SLLVSFTVYIIPALAHMVTFA). Residues 396–421 (SAPARENAVERPPSFLGGWVGLYSVN) lie on the Cytoplasmic side of the membrane. Residues 422 to 442 (VFVAVWVLVVGFGLGGWASML) traverse the membrane as a helical segment. The Extracellular portion of the chain corresponds to 443–465 (NFVHQIKTFGLFAKCFQCPPHKA).

This sequence belongs to the amino acid/polyamine transporter 2 family. Amino acid/auxin permease (AAAP) (TC 2.A.18.1) subfamily. As to expression, shoots and roots of nodulating plants. Low levels in roots, nodules, stems, petioles, leaves, shoot apices and flowers.

It is found in the cell membrane. Its function is as follows. Carrier protein involved in proton-driven auxin influx. Mediates the formation of auxin gradient from developing leaves (site of auxin biosynthesis) to tips by contributing to the loading of auxin in vascular tissues and facilitating acropetal (base to tip) auxin transport within inner tissues of the root apex, and basipetal (tip to base) auxin transport within outer tissues of the root apex. May be involved in lateral roots and nodules formation. In Medicago truncatula (Barrel medic), this protein is Auxin transporter-like protein 3 (LAX3).